A 646-amino-acid chain; its full sequence is Lipoteichoic acid synthase (646 aa).

Residues 1–7 (MSLPKKK) lie on the Cytoplasmic side of the membrane. The chain crosses the membrane as a helical span at residues 8–28 (IGIFAFFLLTVFTITLKTYFS). Residues 29–43 (YYVDFSLGVKGLVQN) are Extracellular-facing. A helical membrane pass occupies residues 44-64 (LILLMNPYSLIALVLSVFLFF). Over 65 to 68 (KGKK) the chain is Cytoplasmic. The chain crosses the membrane as a helical span at residues 69-89 (AFWFIFIGGFLLTFLLYANVV). The Extracellular segment spans residues 90–119 (YFRFFSDFLTFSTLNQAGNVESMGGAVSAS). The chain crosses the membrane as a helical span at residues 120 to 140 (FKWYDFVYFIDTIIYLAILIF). The Cytoplasmic portion of the chain corresponds to 141–153 (KRKWLDNRAFSKK). The helical transmembrane segment at 154 to 174 (FVPVVMATSVALFFLNLAFAE) threads the bilayer. Residues 175–646 (TDRPELLTRT…KSGPKGNEKK (472 aa)) lie on the Extracellular side of the membrane. Residues E255 and T300 each coordinate Mn(2+). The active site involves T300. Position 416 (H416) interacts with substrate. Mn(2+)-binding residues include D475 and H476.

The protein belongs to the LTA synthase family. Proteolytically cleaved.

The protein localises to the cell membrane. It localises to the secreted. Its pathway is cell wall biogenesis; lipoteichoic acid biosynthesis. Catalyzes the polymerization of lipoteichoic acid (LTA) polyglycerol phosphate, a reaction that presumably uses phosphatidylglycerol (PG) as substrate. Is required for staphylococcal growth and cell division process. In Staphylococcus epidermidis (strain ATCC 35984 / DSM 28319 / BCRC 17069 / CCUG 31568 / BM 3577 / RP62A), this protein is Lipoteichoic acid synthase (ltaS).